Consider the following 138-residue polypeptide: uncharacterized protein (138 aa).

Residues 17-38 constitute a DNA-binding region (H-T-H motif); the sequence is LCRNDVAHEAGTNNVQIMRIEK.

This is an uncharacterized protein from Herpetosiphon aurantiacus (Herpetosiphon giganteus).